The following is a 1025-amino-acid chain: Exocyst complex component 6 (1025 aa).

Composition is skewed to basic and acidic residues over residues Met1–Ile10 and Met22–Lys52. 3 disordered regions span residues Met1–Leu122, Leu135–Lys154, and Gln666–Glu691. Residues Leu19–Ala68 adopt a coiled-coil conformation. Residues Ser71 to Asp93 show a composition bias toward low complexity. The segment covering Ser104–Gln118 has biased composition (polar residues). Low complexity-rich tracts occupy residues Leu135 to Ser147 and Gln666 to Asn677. A compositionally biased stretch (acidic residues) spans Asn678–Glu691.

This sequence belongs to the SEC15 family. The exocyst complex is composed of sec3/exoc1, sec5/exoc2, sec6/exoc3, sec8/exoc4, sec10/exoc5, sec15/exoc6, exo70/exoc7 and exo84/exoc8.

The protein resides in the cytoplasm. It localises to the perinuclear region. The protein localises to the midbody. Its subcellular location is the midbody ring. Functionally, component of the exocyst complex involved in the docking of exocytic vesicles with fusion sites on the plasma membrane. The protein is Exocyst complex component 6 (exoc6) of Dictyostelium discoideum (Social amoeba).